The primary structure comprises 223 residues: N-terminal Xaa-Pro-Lys N-methyltransferase 1 (223 aa).

N-acetylmethionine is present on Met-1. Thr-2 carries the post-translational modification N-acetylthreonine; in N-terminal Xaa-Pro-Lys N-methyltransferase 1, N-terminally processed. Residues Gly-69, Arg-74, 91–93 (DVT), 119–120 (LQ), and Gln-135 contribute to the S-adenosyl-L-methionine site.

Belongs to the methyltransferase superfamily. NTM1 family.

The protein resides in the nucleus. The catalysed reaction is N-terminal L-alanyl-L-prolyl-L-lysyl-[protein] + 3 S-adenosyl-L-methionine = N-terminal N,N,N-trimethyl-L-alanyl-L-prolyl-L-lysyl-[protein] + 3 S-adenosyl-L-homocysteine + 3 H(+). The enzyme catalyses N-terminal L-seryl-L-prolyl-L-lysyl-[protein] + 3 S-adenosyl-L-methionine = N-terminal N,N,N-trimethyl-L-seryl-L-prolyl-L-lysyl-[protein] + 3 S-adenosyl-L-homocysteine + 3 H(+). It catalyses the reaction N-terminal L-prolyl-L-prolyl-L-lysyl-[protein] + 2 S-adenosyl-L-methionine = N-terminal N,N-dimethyl-L-prolyl-L-prolyl-L-lysyl-[protein] + 2 S-adenosyl-L-homocysteine + 2 H(+). Functionally, distributive alpha-N-methyltransferase that methylates the N-terminus of target proteins containing the N-terminal motif [Ala/Gly/Pro/Ser]-Pro-Lys when the initiator Met is cleaved. Specifically catalyzes mono-, di- or tri-methylation of the exposed alpha-amino group of the Ala, Gly or Ser residue in the [Ala/Gly/Ser]-Pro-Lys motif and mono- or di-methylation of Pro in the Pro-Pro-Lys motif. Some of the substrates may be primed by NTMT2-mediated monomethylation. Catalyzes the trimethylation of the N-terminal Gly in CENPA (after removal of Met-1). Responsible for the N-terminal methylation of KLHL31, MYL2, MYL3, RB1, RCC1, RPL23A and SET. Required during mitosis for normal bipolar spindle formation and chromosome segregation via its action on RCC1. The sequence is that of N-terminal Xaa-Pro-Lys N-methyltransferase 1 (NTMT1) from Bos taurus (Bovine).